A 648-amino-acid polypeptide reads, in one-letter code: Probable alpha-galactosidase D (648 aa).

The signal sequence occupies residues 1–16; it reads MEFIVSLLLLSPALVA. Asn84 and Asn90 each carry an N-linked (GlcNAc...) asparagine glycan. A disulfide bond links Cys123 and Cys156. The active-site Nucleophile is Asp154. Substrate is bound at residue 199–203; sequence EWGID. The active-site Proton donor is Asp221. N-linked (GlcNAc...) asparagine glycosylation is found at Asn339, Asn350, Asn505, and Asn572.

This sequence belongs to the glycosyl hydrolase 27 family.

Its subcellular location is the secreted. The catalysed reaction is Hydrolysis of terminal, non-reducing alpha-D-galactose residues in alpha-D-galactosides, including galactose oligosaccharides, galactomannans and galactolipids.. In terms of biological role, hydrolyzes a variety of simple alpha-D-galactoside as well as more complex molecules such as oligosaccharides and polysaccharides. This is Probable alpha-galactosidase D (aglD) from Aspergillus fumigatus (strain CBS 144.89 / FGSC A1163 / CEA10) (Neosartorya fumigata).